Consider the following 420-residue polypeptide: Glycogen synthase kinase-3 beta (420 aa).

Over residues 1–22 (MSGRPRTTSFAESCKPVQQPSA) the composition is skewed to polar residues. The disordered stretch occupies residues 1–53 (MSGRPRTTSFAESCKPVQQPSAFGSMKVSRDKDGSKVTTVVATPGQGPDRPQE). The residue at position 9 (S9) is a Phosphoserine; by PKB/AKT1, RPS6KA3 and SGK3. Residue C14 is the site of S-palmitoyl cysteine attachment. The 285-residue stretch at 56–340 (YTDTKVIGNG…PLEACAHSFF (285 aa)) folds into the Protein kinase domain. ATP-binding positions include 62 to 70 (IGNGSFGVV) and K85. D181 acts as the Proton acceptor in catalysis. At Y216 the chain carries Phosphotyrosine. A disordered region spans residues 385–420 (QAAASPPANATAASDTNAGDRGQTNNAASASASNST). 2 stretches are compositionally biased toward low complexity: residues 386–401 (AAASPPANATAASDTN) and 409–420 (NNAASASASNST). A Phosphoserine modification is found at S389.

This sequence belongs to the protein kinase superfamily. CMGC Ser/Thr protein kinase family. GSK-3 subfamily. As to quaternary structure, monomer. Interacts with DAB2IP (via C2 domain); the interaction stimulates GSK3B kinase activation. Interacts (via C2 domain) with PPP2CA. Interacts with CABYR, MMP2, MUC1, NIN and PRUNE1. Interacts with AXIN1; the interaction mediates hyperphosphorylation of CTNNB1 leading to its ubiquitination and destruction. Interacts with and phosphorylates SNAI1. Interacts with DNM1L (via a C-terminal domain). Interacts with ARRB2. Interacts with DISC1. Found in a complex composed of MACF1, APC, AXIN1, CTNNB1 and GSK3B. Interacts with SGK3. Interacts with the CLOCK-BMAL1 heterodimer. Interacts with ZBED3. Interacts with the BMAL1. The complex composed, at least, of APC, CTNNB1 and GSK3B interacts with JPT1; the interaction requires the inactive form of GSK3B (phosphorylated at 'Ser-9'). Forms a complex composed of PRKAR2A or PRKAR2B, GSK3B and GSKIP through GSKIP interaction; facilitates PKA-induced phosphorylation and regulates GSK3B activity. Interacts with GSKIP. Interacts with GID8. Interacts with PIWIL2. Interacts with LMBR1L. Interacts with DDX3X. Interacts with BIRC2. Interacts with TNFRSF10B; TNFRSF10B stimulation inhibits GSK3B kinase activity. Found in a complex with SLC39A6, SLC39A10 and with GSK3B that controls NCAM1 phosphorylation. Interacts with PKP3 (via ARM repeats); the interaction may be involved in PKP3 protein degradation. Post-translationally, phosphorylated by AKT1 and ILK1. Upon insulin-mediated signaling, the activated PKB/AKT1 protein kinase phosphorylates and deactivates GSK3B, resulting in the dephosphorylation and activation of GYS1. Activated by phosphorylation at Tyr-216. Phosphorylation of Ser-9 in the hippocampus peaks at CT0, whereas in the liver it peaks at CT12. Inactivated by phosphorylation at Ser-9. Phosphorylated in a circadian manner in the hippocampus. Mono-ADP-ribosylation by PARP10 negatively regulates kinase activity. In terms of processing, palmitoylated. Palmitoylation by ZDHHC4 prevents AKT1-mediated phosphorylation. As to expression, expressed in the liver (at protein level).

Its subcellular location is the cytoplasm. It localises to the nucleus. The protein resides in the cell membrane. The enzyme catalyses L-seryl-[tau protein] + ATP = O-phospho-L-seryl-[tau protein] + ADP + H(+). It catalyses the reaction L-threonyl-[tau protein] + ATP = O-phospho-L-threonyl-[tau protein] + ADP + H(+). The catalysed reaction is L-seryl-[protein] + ATP = O-phospho-L-seryl-[protein] + ADP + H(+). It carries out the reaction L-threonyl-[protein] + ATP = O-phospho-L-threonyl-[protein] + ADP + H(+). Its activity is regulated as follows. Activated by phosphorylation at Tyr-216. In response to insulin, inhibited by phosphorylation at Ser-9 by PKB/AKT1 and RPS6KA3; phosphorylation at this site causes a conformational change, preventing access of substrates to the active site. Inhibited by IL22 treatment which also triggers phosphorylation at Ser-9, promoting inactivation. Inhibited by lithium. Its function is as follows. Constitutively active protein kinase that acts as a negative regulator in the hormonal control of glucose homeostasis, Wnt signaling and regulation of transcription factors and microtubules, by phosphorylating and inactivating glycogen synthase (GYS1 or GYS2), EIF2B, CTNNB1/beta-catenin, APC, AXIN1, DPYSL2/CRMP2, JUN, NFATC1/NFATC, MAPT/TAU and MACF1. Requires primed phosphorylation of the majority of its substrates. In skeletal muscle, contributes to insulin regulation of glycogen synthesis by phosphorylating and inhibiting GYS1 activity and hence glycogen synthesis. May also mediate the development of insulin resistance by regulating activation of transcription factors. Regulates protein synthesis by controlling the activity of initiation factor 2B (EIF2BE/EIF2B5) in the same manner as glycogen synthase. In Wnt signaling, GSK3B forms a multimeric complex with APC, AXIN1 and CTNNB1/beta-catenin and phosphorylates the N-terminus of CTNNB1 leading to its degradation mediated by ubiquitin/proteasomes. Phosphorylates JUN at sites proximal to its DNA-binding domain, thereby reducing its affinity for DNA. Phosphorylates NFATC1/NFATC on conserved serine residues promoting NFATC1/NFATC nuclear export, shutting off NFATC1/NFATC gene regulation, and thereby opposing the action of calcineurin. Phosphorylates MAPT/TAU on 'Thr-548', decreasing significantly MAPT/TAU ability to bind and stabilize microtubules. MAPT/TAU is the principal component of neurofibrillary tangles in Alzheimer disease. Plays an important role in ERBB2-dependent stabilization of microtubules at the cell cortex. Phosphorylates MACF1, inhibiting its binding to microtubules which is critical for its role in bulge stem cell migration and skin wound repair. Probably regulates NF-kappa-B (NFKB1) at the transcriptional level and is required for the NF-kappa-B-mediated anti-apoptotic response to TNF-alpha (TNF/TNFA). Negatively regulates replication in pancreatic beta-cells, resulting in apoptosis, loss of beta-cells and diabetes. Through phosphorylation of the anti-apoptotic protein MCL1, may control cell apoptosis in response to growth factors deprivation. Phosphorylates MUC1 in breast cancer cells, decreasing the interaction of MUC1 with CTNNB1/beta-catenin. Is necessary for the establishment of neuronal polarity and axon outgrowth. Phosphorylates MARK2, leading to inhibition of its activity. Phosphorylates SIK1 at 'Thr-182', leading to sustainment of its activity. Phosphorylates ZC3HAV1 which enhances its antiviral activity. Phosphorylates SNAI1, leading to its ubiquitination and proteasomal degradation. Phosphorylates SFPQ at 'Thr-687' upon T-cell activation. Phosphorylates NR1D1 st 'Ser-55' and 'Ser-59' and stabilizes it by protecting it from proteasomal degradation. Regulates the circadian clock via phosphorylation of the major clock components including BMAL1, CLOCK and PER2. Phosphorylates CLOCK AT 'Ser-427' and targets it for proteasomal degradation. Phosphorylates BMAL1 at 'Ser-17' and 'Ser-21' and primes it for ubiquitination and proteasomal degradation. Phosphorylates FBXL2 at 'Thr-404' and primes it for ubiquitination by the SCF(FBXO3) complex and proteasomal degradation. Phosphorylates OGT at 'Ser-3' or 'Ser-4' which positively regulates its activity. Phosphorylates MYCN in neuroblastoma cells which may promote its degradation. Regulates the circadian rhythmicity of hippocampal long-term potentiation and BMAL1 and PER2 expression. Acts as a regulator of autophagy by mediating phosphorylation of KAT5/TIP60 under starvation conditions, activating KAT5/TIP60 acetyltransferase activity and promoting acetylation of key autophagy regulators, such as ULK1 and RUBCNL/Pacer. Negatively regulates extrinsic apoptotic signaling pathway via death domain receptors. Promotes the formation of an anti-apoptotic complex, made of DDX3X, BRIC2 and GSK3B, at death receptors, including TNFRSF10B. The anti-apoptotic function is most effective with weak apoptotic signals and can be overcome by stronger stimulation. Phosphorylates E2F1, promoting the interaction between E2F1 and USP11, stabilizing E2F1 and promoting its activity. Phosphorylates mTORC2 complex component RICTOR at 'Ser-1235' in response to endoplasmic stress, inhibiting mTORC2. Phosphorylates FXR1, promoting FXR1 ubiquitination by the SCF(FBXO4) complex and FXR1 degradation by the proteasome. Phosphorylates interleukin-22 receptor subunit IL22RA1, preventing its proteasomal degradation. The chain is Glycogen synthase kinase-3 beta from Mus musculus (Mouse).